Reading from the N-terminus, the 302-residue chain is Nucleotide-binding protein RHOS4_02640 (302 aa).

15–22 provides a ligand contact to ATP; the sequence is GPSGAGRT. 62–65 lines the GTP pocket; it reads DVRN.

It belongs to the RapZ-like family.

Its function is as follows. Displays ATPase and GTPase activities. In Cereibacter sphaeroides (strain ATCC 17023 / DSM 158 / JCM 6121 / CCUG 31486 / LMG 2827 / NBRC 12203 / NCIMB 8253 / ATH 2.4.1.) (Rhodobacter sphaeroides), this protein is Nucleotide-binding protein RHOS4_02640.